Consider the following 463-residue polypeptide: MSVLIVGMSHRSAPVSLLERLSMDDSVRGETTQALLGRASLSEALIVSTCNRLEVYTVTSSFHTGVNDVVEVLHEASGVDIETLRGYLYVRYADAAAEHMLVVTSGLDSMVLGEQQIIGQVRTAYQAANEYGSVGPALHSLTQTALHTGKRVHSETAIDDAGASMVSFAVDRALVQMGLDSEAEAPLSGKTALVLGAGAMSSLAATHLGRAGISKLIMANRTLERAERLAEHSLEAGVPAEVVEYDQRASAYNRVDLVVSATGADDFTVKPEDIPEGASLMLVDLSMPRDIDDACADLPGVDLVNIERLHKASREGGSGMAPSEEEALAIVREELDSFTSEQRIRDIVPAVSALRRQAASVGSDELDRLRQRAPGISEVEWGEVEKTVRRVVDKLLHQPTVRVKELAARSGSISYDSALQELFGLESLASTAAPATTSVNASELPDAGIVAFVNAPSATQTRE.

Residues 49–52 (TCNR), serine 109, 114–116 (EQQ), and glutamine 120 each bind substrate. Residue cysteine 50 is the Nucleophile of the active site. An NADP(+)-binding site is contributed by 196 to 201 (GAGAMS).

It belongs to the glutamyl-tRNA reductase family. In terms of assembly, homodimer.

The enzyme catalyses (S)-4-amino-5-oxopentanoate + tRNA(Glu) + NADP(+) = L-glutamyl-tRNA(Glu) + NADPH + H(+). Its pathway is porphyrin-containing compound metabolism; protoporphyrin-IX biosynthesis; 5-aminolevulinate from L-glutamyl-tRNA(Glu): step 1/2. Functionally, catalyzes the NADPH-dependent reduction of glutamyl-tRNA(Glu) to glutamate 1-semialdehyde (GSA). This chain is Glutamyl-tRNA reductase, found in Corynebacterium glutamicum (strain R).